Reading from the N-terminus, the 384-residue chain is Calreticulin-3 (384 aa).

The first 19 residues, Met1–Ala19, serve as a signal peptide directing secretion. Positions Thr20–Glu197 are N-domain. The N-linked (GlcNAc...) asparagine glycan is linked to Asn42. Residues Cys105 and Cys137 are joined by a disulfide bond. The an alpha-D-glucoside site is built by Tyr109, Lys111, Tyr128, and Asp135. 7 tandem repeats follow at residues Ile191–Leu202, Glu209–Gln220, Ala222–Lys231, Asp235–Gly246, Gly250–Pro260, Asp264–Asp272, and Asp274–Ser284. The tract at residues Ile191–Gly246 is 4 X approximate repeats. Positions Tyr198 to Phe294 are P-domain. A 3 X approximate repeats region spans residues Gly250–Ser284. Residues Glu295–Phe384 form a C-domain region. Glu303 contributes to the an alpha-D-glucoside binding site. The Prevents secretion from ER motif lies at Arg381 to Phe384.

It belongs to the calreticulin family. Component of an EIF2 complex at least composed of CELF1/CUGBP1, CALR, CALR3, EIF2S1, EIF2S2, HSP90B1 and HSPA5.

The protein localises to the endoplasmic reticulum lumen. During spermatogenesis, may act as a lectin-independent chaperone for specific client proteins such as ADAM3. CALR3 capacity for calcium-binding may be absent or much lower than that of CALR. Required for sperm fertility. This is Calreticulin-3 (CALR3) from Bos taurus (Bovine).